We begin with the raw amino-acid sequence, 1213 residues long: MAAPANASSKKDHVIPVLLNECSIDSPSFRASMYYLGNQIKAFNEWSHDFLCCCNKFIESIMAIEPIVASMSLNAMPSNVASGFFDPDYATTALLHGQDLFRSSYMVQLQQAKNLRKFIVAPLDLFRDSKVKPLLQLNDRFKAEQAKYDAEVLRYSSLGHSKDLSQMRDEAKSLYEARKSYFTVALQYVVRVTSFRSSIDFIVIESICKFSIETFRLTDRLHESNRHINDQLIRLLSYETKLKESYPSLKRIVSNVFDRIEKEILKRVQPPTNLDAYRFDPQQICQTNATKRQGWLLRNISSSKADNKAIWRKYWFFVDNGYVGYLINDANGGVFESEKIGVLLCKFSVLPSNHRKFCFQIKTKSVSYILQAETHMEMLEWGSVINNAREHCINSGISANRILSPTLPSFSAKATSIINPQVNGRSNSTGKIGKNYRPRRTYSGRLLCGPNNYEVSTIMRSPTISTVPPPKYLSNSINGAKFLNPLAPWTLVNAPLITNLTHETITSLLDQEAFFHGNSPCALLANFWGSVNYGHVLERQNVYIEDLSNPSYKRLAREIHIEKLPSELKLRNAEFRGIFGESEASTVLFVCRVCSKREDQIRMPGRMYCTMKGIYIYYNINGLVLIEHFPISSILNVKQFASTKCDYFYMNIQNIGTVRFRLYLDSSKALTDRLNVLLCNYIADKPNSSIQLLSCIKRLNDDVKRFERGGDDNALKSYGVQPSQEDLLIRRGRSSRALTNLINKNESNDSFMEDLRDFKIAMLPKETVQVVRSHHLDDIVFDRVYNVSTKALFHIVFGDRSTVLSGAYNLHGVDDVEFLPWGKDPKTNLSRRYINYKVYNYDQEGQCQSYHYEDCQIMDVRNDYHLYIMTWLHHSWTLPYRDYFKIVTKTSISHLRREKSRLLISVGLEWIVKPFAISKVIEAECRKLAIKYIKTEVNFLEKATRRARNQPLIAIINQYGRVGDYNESMVYRRKIPFNCELKNLSIIDIIRNNWWLFLQGLAIDLLKLPWAVFHIFLRYLFSHSFLVIIFACSVILNLSLMFCFGAKYWDERQNNKFVGQVFDEFKNIETSARYVYMKDVDDLLVGLPTYLHPNVTYPSECLQSFALKSSPQKSHWLRKRNYIAEKRKKILENLASLNYYEYIIHEDAVYQYIQQELLGCDKAREFDLYPPSMQRYCDSCTQDWRNRTLFFGKDTLATRLLTLETVENADYAA.

The PH domain occupies 289–390; it reads ATKRQGWLLR…WGSVINNARE (102 aa). Positions 776-945 constitute a VASt domain; it reads LDDIVFDRVY…EVNFLEKATR (170 aa). 2 helical membrane-spanning segments follow: residues 996 to 1016 and 1025 to 1045; these read LFLQGLAIDLLKLPWAVFHIF and FLVIIFACSVILNLSLMFCFG.

Its subcellular location is the cytoplasm. The protein localises to the nucleus membrane. The protein resides in the cytoskeleton. It localises to the microtubule organizing center. It is found in the spindle pole body. This is an uncharacterized protein from Schizosaccharomyces pombe (strain 972 / ATCC 24843) (Fission yeast).